The sequence spans 283 residues: MAEITASLVKELRDRTGAGMMECKKALVEANGDIELAIDNMRKSGQAKAAKKAGRVAAEGVILARVENGFGVLVEMNCETDFVAKDAGFLGLANEVADFAAANKGTTIEALQAQFEEKRAALVAKIGENMNIRRVAYLDGQVIAQYLHGAKIGVLVAGEGSDDELKKVAMHVAASKPEFVNPEDVSAEVVEHERQIQIDIAINSGKPKEIAEKMVEGRMKKFTGEVSLTGQAFVMDPSVSVGDFLKSVNTSVSNFIRLEVGEGIEKKEEDFAAEVAKITGGNA.

The tract at residues 80-83 (TDFV) is involved in Mg(2+) ion dislocation from EF-Tu.

The protein belongs to the EF-Ts family.

Its subcellular location is the cytoplasm. Associates with the EF-Tu.GDP complex and induces the exchange of GDP to GTP. It remains bound to the aminoacyl-tRNA.EF-Tu.GTP complex up to the GTP hydrolysis stage on the ribosome. The polypeptide is Elongation factor Ts (Haemophilus influenzae (strain PittGG)).